Consider the following 249-residue polypeptide: tRNA pseudouridine synthase A (249 aa).

The Nucleophile role is filled by D54. Y111 is a binding site for substrate.

Belongs to the tRNA pseudouridine synthase TruA family. In terms of assembly, homodimer.

It catalyses the reaction uridine(38/39/40) in tRNA = pseudouridine(38/39/40) in tRNA. In terms of biological role, formation of pseudouridine at positions 38, 39 and 40 in the anticodon stem and loop of transfer RNAs. The chain is tRNA pseudouridine synthase A from Mycoplasma capricolum subsp. capricolum (strain California kid / ATCC 27343 / NCTC 10154).